Here is a 130-residue protein sequence, read N- to C-terminus: Small ribosomal subunit protein uS11 (130 aa).

This sequence belongs to the universal ribosomal protein uS11 family. Part of the 30S ribosomal subunit. Interacts with proteins S7 and S18. Binds to IF-3.

In terms of biological role, located on the platform of the 30S subunit, it bridges several disparate RNA helices of the 16S rRNA. Forms part of the Shine-Dalgarno cleft in the 70S ribosome. The protein is Small ribosomal subunit protein uS11 of Prochlorococcus marinus subsp. pastoris (strain CCMP1986 / NIES-2087 / MED4).